The following is a 372-amino-acid chain: Virion morphogenesis protein OPG132 (372 aa).

This sequence belongs to the orthopoxvirus OPG132 family.

It is found in the host cytoplasm. Its subcellular location is the virion. Its function is as follows. Lipid-bound viral membrane assembly protein that plays an essential role in immature virion (IV) to mature virion (MV) transition. Functions in both crescent-shaped viral membranes formation and its enclosure to form immature virions. In addition, participates in targeting mature virion proteins to sites of virion assembly to ensure their correct localization. This Homo sapiens (Human) protein is Virion morphogenesis protein OPG132 (OPG132).